Here is a 126-residue protein sequence, read N- to C-terminus: Large ribosomal subunit protein bL20 (126 aa).

It belongs to the bacterial ribosomal protein bL20 family.

In terms of biological role, binds directly to 23S ribosomal RNA and is necessary for the in vitro assembly process of the 50S ribosomal subunit. It is not involved in the protein synthesizing functions of that subunit. The sequence is that of Large ribosomal subunit protein bL20 from Buchnera aphidicola subsp. Baizongia pistaciae (strain Bp).